Reading from the N-terminus, the 288-residue chain is Pantothenate synthetase (288 aa).

An ATP-binding site is contributed by 30–37; the sequence is MGNLHAGH. The active-site Proton donor is the histidine 37. Glutamine 61 serves as a coordination point for (R)-pantoate. Glutamine 61 contributes to the beta-alanine binding site. Position 149 to 152 (149 to 152) interacts with ATP; that stretch reads GLKD. Position 155 (glutamine 155) interacts with (R)-pantoate. ATP contacts are provided by residues isoleucine 178 and 186 to 189; that span reads LSSR.

It belongs to the pantothenate synthetase family. As to quaternary structure, homodimer.

The protein localises to the cytoplasm. The enzyme catalyses (R)-pantoate + beta-alanine + ATP = (R)-pantothenate + AMP + diphosphate + H(+). It functions in the pathway cofactor biosynthesis; (R)-pantothenate biosynthesis; (R)-pantothenate from (R)-pantoate and beta-alanine: step 1/1. Functionally, catalyzes the condensation of pantoate with beta-alanine in an ATP-dependent reaction via a pantoyl-adenylate intermediate. The chain is Pantothenate synthetase from Colwellia psychrerythraea (strain 34H / ATCC BAA-681) (Vibrio psychroerythus).